A 3135-amino-acid polypeptide reads, in one-letter code: Beauvericin nonribosomal cyclodepsipeptide synthetase BEA1 (3135 aa).

The tract at residues 70–458 (HVAYEISNDI…QRLRGSPDKL (389 aa)) is condensation 1. A disordered region spans residues 196–228 (LSNRPYTPESSDPEDDGLSLTPTDGSKTPETEG). The segment at 499 to 896 (SLSPSKVAIC…GRMDSQVKIR (398 aa)) is adenylation 1. In terms of domain architecture, Carrier 1 spans 1021-1097 (STTTSSQSKL…GLEAIVNGSA (77 aa)). Ser1058 is modified (O-(pantetheine 4'-phosphoryl)serine). Residues 1115 to 1542 (SYSQGRLWFL…NIPISVLPLT (428 aa)) form a condensation 2 region. The tract at residues 1571–1974 (FRTQVAAYPD…GRMDTQFKIR (404 aa)) is adenylation 2. An S-adenosyl-L-methionine-dependent N-methyltransferase region spans residues 2042–2182 (MYADIGDIDP…FPSPEYLAQV (141 aa)). Carrier domains follow at residues 2509 to 2583 (VPIS…REGL) and 2603 to 2677 (APRT…ESTD). O-(pantetheine 4'-phosphoryl)serine is present on residues Ser2543 and Ser2637. The tract at residues 2721–3127 (QDMYQSTQMQ…QYFLEEVCNT (407 aa)) is condensation 3.

This sequence belongs to the NRP synthetase family.

It catalyses the reaction 3 (R)-2-hydroxy-3-methylbutanoate + 3 L-phenylalanine + 3 S-adenosyl-L-methionine + 6 ATP = beauvericin + 6 AMP + 3 S-adenosyl-L-homocysteine + 6 diphosphate + 6 H(+). Its function is as follows. Beauvericin nonribosomal cyclodepsipeptide synthetase; part of the gene cluster that mediates the biosynthesis of beauvericin (BEA), a non-ribosomal cyclic hexadepsipeptide that shows antibiotic, antifungal, insecticidal, and cancer cell antiproliferative and antihaptotactic activity. Ketoisovalerate reductase BEA2 catalyzes the NADPH-specific reduction of ketoisovaleric acid to hydroxyisovalerate, a precursor for beauvericin biosynthesis. The nonribosomal cyclodepsipeptide synthetase BEA1 then catalyzes the formation of beauvericin via condensation and cyclization of 3 dipeptidol monomers, each composed of one unit of hydroxyisovalerate and one unit of N-methyl-phenylalanine. This Gibberella fujikuroi (strain CBS 195.34 / IMI 58289 / NRRL A-6831) (Bakanae and foot rot disease fungus) protein is Beauvericin nonribosomal cyclodepsipeptide synthetase BEA1.